Consider the following 570-residue polypeptide: Sorting nexin-41 (570 aa).

2 disordered regions span residues 1-31 (MSDFEDNNPFAGADRRDSVSSDATDDGPSAS) and 81-115 (FDDGSNSFSATPTASITNQNDTAHEATNERTTTAS). Positions 84–101 (GSNSFSATPTASITNQND) are enriched in polar residues. A PX domain is found at 98–236 (NQNDTAHEAT…RFLDPHASWS (139 aa)). A 1,2-diacyl-sn-glycero-3-phospho-(1D-myo-inositol-3-phosphate) contacts are provided by Arg153, Ser155, Lys179, and Arg202. Residues 429 to 498 (DSQRINDALG…ASRRQGIGKT (70 aa)) form a disordered region. Residues 440–454 (TRSNNGPSTTNSGEQ) are compositionally biased toward polar residues. Residues 455–464 (PSASPAPKKS) show a composition bias toward low complexity.

This sequence belongs to the sorting nexin family.

It localises to the endosome membrane. The protein localises to the endomembrane system. May be required for cytoplasm to vacuole transport (Cvt) and pexophagy. The polypeptide is Sorting nexin-41 (SNX41) (Yarrowia lipolytica (strain CLIB 122 / E 150) (Yeast)).